We begin with the raw amino-acid sequence, 126 residues long: Phosphoribosyl-AMP cyclohydrolase (126 aa).

Aspartate 76 serves as a coordination point for Mg(2+). Residue cysteine 77 participates in Zn(2+) binding. 2 residues coordinate Mg(2+): aspartate 78 and aspartate 80. Zn(2+)-binding residues include cysteine 94 and cysteine 101.

This sequence belongs to the PRA-CH family. As to quaternary structure, homodimer. Mg(2+) is required as a cofactor. Zn(2+) serves as cofactor.

It is found in the cytoplasm. It carries out the reaction 1-(5-phospho-beta-D-ribosyl)-5'-AMP + H2O = 1-(5-phospho-beta-D-ribosyl)-5-[(5-phospho-beta-D-ribosylamino)methylideneamino]imidazole-4-carboxamide. The protein operates within amino-acid biosynthesis; L-histidine biosynthesis; L-histidine from 5-phospho-alpha-D-ribose 1-diphosphate: step 3/9. Functionally, catalyzes the hydrolysis of the adenine ring of phosphoribosyl-AMP. In Nitratidesulfovibrio vulgaris (strain ATCC 29579 / DSM 644 / CCUG 34227 / NCIMB 8303 / VKM B-1760 / Hildenborough) (Desulfovibrio vulgaris), this protein is Phosphoribosyl-AMP cyclohydrolase.